The primary structure comprises 476 residues: Cytosolic iron-sulfur assembly component 3 (476 aa).

An N-acetylalanine modification is found at Ala2. [4Fe-4S] cluster-binding residues include Cys24, Cys71, Cys74, Cys77, Cys190, Cys246, Cys395, and Cys399.

Belongs to the NARF family. External component of the CIA complex. In the CIA complex, interacts directly with CIAO1 and MMS19.

Component of the cytosolic iron-sulfur protein assembly (CIA) complex, a multiprotein complex that mediates the incorporation of iron-sulfur cluster into extramitochondrial Fe/S proteins. Seems to negatively regulate the level of HIF1A expression, although this effect could be indirect. The sequence is that of Cytosolic iron-sulfur assembly component 3 from Bos taurus (Bovine).